A 117-amino-acid chain; its full sequence is Urease subunit beta (117 aa).

The disordered stretch occupies residues 95–117 (NAVNGKLDGGPHPGVPATERGAK).

It belongs to the urease beta subunit family. In terms of assembly, heterotrimer of UreA (gamma), UreB (beta) and UreC (alpha) subunits. Three heterotrimers associate to form the active enzyme.

Its subcellular location is the cytoplasm. The enzyme catalyses urea + 2 H2O + H(+) = hydrogencarbonate + 2 NH4(+). It participates in nitrogen metabolism; urea degradation; CO(2) and NH(3) from urea (urease route): step 1/1. This chain is Urease subunit beta, found in Pseudarthrobacter chlorophenolicus (strain ATCC 700700 / DSM 12829 / CIP 107037 / JCM 12360 / KCTC 9906 / NCIMB 13794 / A6) (Arthrobacter chlorophenolicus).